We begin with the raw amino-acid sequence, 216 residues long: FMN-dependent NADH:quinone oxidoreductase (216 aa).

FMN-binding positions include 15–17 and 139–142; these read SVS and SRGG.

This sequence belongs to the azoreductase type 1 family. Homodimer. Requires FMN as cofactor.

The enzyme catalyses 2 a quinone + NADH + H(+) = 2 a 1,4-benzosemiquinone + NAD(+). It catalyses the reaction N,N-dimethyl-1,4-phenylenediamine + anthranilate + 2 NAD(+) = 2-(4-dimethylaminophenyl)diazenylbenzoate + 2 NADH + 2 H(+). Its function is as follows. Quinone reductase that provides resistance to thiol-specific stress caused by electrophilic quinones. Also exhibits azoreductase activity. Catalyzes the reductive cleavage of the azo bond in aromatic azo compounds to the corresponding amines. In Acidovorax ebreus (strain TPSY) (Diaphorobacter sp. (strain TPSY)), this protein is FMN-dependent NADH:quinone oxidoreductase.